Reading from the N-terminus, the 426-residue chain is Serine--tRNA ligase (426 aa).

229–231 (TAE) serves as a coordination point for L-serine. ATP contacts are provided by residues 260–262 (RTE) and Val276. Glu283 is an L-serine binding site. 350 to 353 (EVTS) lines the ATP pocket. Thr386 provides a ligand contact to L-serine.

The protein belongs to the class-II aminoacyl-tRNA synthetase family. Type-1 seryl-tRNA synthetase subfamily. In terms of assembly, homodimer. The tRNA molecule binds across the dimer.

It localises to the cytoplasm. The enzyme catalyses tRNA(Ser) + L-serine + ATP = L-seryl-tRNA(Ser) + AMP + diphosphate + H(+). It catalyses the reaction tRNA(Sec) + L-serine + ATP = L-seryl-tRNA(Sec) + AMP + diphosphate + H(+). Its pathway is aminoacyl-tRNA biosynthesis; selenocysteinyl-tRNA(Sec) biosynthesis; L-seryl-tRNA(Sec) from L-serine and tRNA(Sec): step 1/1. Functionally, catalyzes the attachment of serine to tRNA(Ser). Is also able to aminoacylate tRNA(Sec) with serine, to form the misacylated tRNA L-seryl-tRNA(Sec), which will be further converted into selenocysteinyl-tRNA(Sec). This chain is Serine--tRNA ligase, found in Rhodopirellula baltica (strain DSM 10527 / NCIMB 13988 / SH1).